Here is an 89-residue protein sequence, read N- to C-terminus: ATP synthase subunit H, mitochondrial (89 aa).

F-type ATP synthases have 2 components, the catalytic core F(1) and the membrane-embedded component F(0), linked together by a central stalk and a peripheral stalk. The central stalk, also called rotor shaft, is often seen as part of F(1). The peripheral stalk is seen as part of F(0). F(0) contains the membrane channel next to the rotor. F-type ATP synthases form dimers but each monomer functions independently in ATP generation. The dimer consists of 18 different polypeptides: ATP1 (subunit alpha, part of F(1), 3 molecules per monomer), ATP2 (subunit beta, part of F(1), 3 molecules per monomer), ATP3 (subunit gamma, part of the central stalk), ATP4 (subunit b, part of the peripheral stalk), ATP5/OSCP (subunit 5/OSCP, part of the peripheral stalk), ATP6 (subunit a, part of the peripheral stalk), ATP7 (subunit d, part of the peripheral stalk), ATP8 (subunit 8, part of the peripheral stalk), OLI1 (subunit c, part of the rotor, 10 molecules per monomer), ATP14 (subunit H, part of the peripheral stalk), ATP15 (subunit epsilon, part of the central stalk), ATP16 (subunit delta, part of the central stalk), ATP17 (subunit f, part of the peripheral stalk), ATP18 (subunit i/j, part of the peripheral stalk). Dimer-specific subunits are ATP19 (subunit k, at interface between monomers), ATP20 (subunit g, at interface between monomers), TIM11 (subunit e, at interface between monomers). Also contains subunit L.

Its subcellular location is the mitochondrion inner membrane. Its function is as follows. Mitochondrial membrane ATP synthase (F(1)F(0) ATP synthase or Complex V) produces ATP from ADP in the presence of a proton gradient across the membrane which is generated by electron transport complexes of the respiratory chain. F-type ATP synthases consist of two structural domains, F(1) - containing the extramembraneous catalytic core, and F(0) - containing the membrane proton channel, linked together by a central stalk and a peripheral stalk. During catalysis, ATP synthesis in the catalytic domain of F(1) is coupled via a rotary mechanism of the central stalk subunits to proton translocation. Part of the peripheral stalk. The polypeptide is ATP synthase subunit H, mitochondrial (Pichia angusta (Yeast)).